Reading from the N-terminus, the 366-residue chain is Inositol 2-dehydrogenase (366 aa).

This sequence belongs to the Gfo/Idh/MocA family. As to quaternary structure, homotetramer.

The enzyme catalyses myo-inositol + NAD(+) = scyllo-inosose + NADH + H(+). Involved in the oxidation of myo-inositol (MI) to 2-keto-myo-inositol (2KMI or 2-inosose). The sequence is that of Inositol 2-dehydrogenase from Rhodococcus jostii (strain RHA1).